A 502-amino-acid chain; its full sequence is Lysine--tRNA ligase (502 aa).

Mg(2+)-binding residues include Glu413 and Glu420.

The protein belongs to the class-II aminoacyl-tRNA synthetase family. In terms of assembly, homodimer. Mg(2+) serves as cofactor.

It is found in the cytoplasm. The catalysed reaction is tRNA(Lys) + L-lysine + ATP = L-lysyl-tRNA(Lys) + AMP + diphosphate. The polypeptide is Lysine--tRNA ligase (Haemophilus influenzae (strain 86-028NP)).